The sequence spans 494 residues: Sulfate adenylyltransferase subunit 1 (494 aa).

The 215-residue stretch at 28–242 (TRPLRLITCG…TLELATVRST (215 aa)) folds into the tr-type G domain. Positions 37-44 (GSVDDGKS) are G1. 37-44 (GSVDDGKS) is a GTP binding site. Positions 94-98 (GITID) are G2. Residues 115–118 (DTPG) are G3. GTP-binding positions include 115 to 119 (DTPGH) and 170 to 173 (NKID). Residues 170-173 (NKID) form a G4 region. Positions 207–209 (SAL) are G5.

The protein belongs to the TRAFAC class translation factor GTPase superfamily. Classic translation factor GTPase family. CysN/NodQ subfamily. In terms of assembly, heterodimer composed of CysD, the smaller subunit, and CysN.

The catalysed reaction is sulfate + ATP + H(+) = adenosine 5'-phosphosulfate + diphosphate. It functions in the pathway sulfur metabolism; hydrogen sulfide biosynthesis; sulfite from sulfate: step 1/3. Its function is as follows. With CysD forms the ATP sulfurylase (ATPS) that catalyzes the adenylation of sulfate producing adenosine 5'-phosphosulfate (APS) and diphosphate, the first enzymatic step in sulfur assimilation pathway. APS synthesis involves the formation of a high-energy phosphoric-sulfuric acid anhydride bond driven by GTP hydrolysis by CysN coupled to ATP hydrolysis by CysD. The protein is Sulfate adenylyltransferase subunit 1 of Agrobacterium fabrum (strain C58 / ATCC 33970) (Agrobacterium tumefaciens (strain C58)).